Consider the following 483-residue polypeptide: Glutamyl-tRNA(Gln) amidotransferase subunit A (483 aa).

Active-site charge relay system residues include Lys75 and Ser150. Residue Ser174 is the Acyl-ester intermediate of the active site.

It belongs to the amidase family. GatA subfamily. As to quaternary structure, heterotrimer of A, B and C subunits.

The enzyme catalyses L-glutamyl-tRNA(Gln) + L-glutamine + ATP + H2O = L-glutaminyl-tRNA(Gln) + L-glutamate + ADP + phosphate + H(+). Functionally, allows the formation of correctly charged Gln-tRNA(Gln) through the transamidation of misacylated Glu-tRNA(Gln) in organisms which lack glutaminyl-tRNA synthetase. The reaction takes place in the presence of glutamine and ATP through an activated gamma-phospho-Glu-tRNA(Gln). This chain is Glutamyl-tRNA(Gln) amidotransferase subunit A, found in Legionella pneumophila subsp. pneumophila (strain Philadelphia 1 / ATCC 33152 / DSM 7513).